Reading from the N-terminus, the 483-residue chain is Probable cobyric acid synthase (483 aa).

The GATase cobBQ-type domain maps to 247-433; the sequence is ELHIQIIKLP…LHGIFHNFAF (187 aa). The active-site Nucleophile is C325. Residue H425 is part of the active site.

Belongs to the CobB/CobQ family. CobQ subfamily.

Its pathway is cofactor biosynthesis; adenosylcobalamin biosynthesis. Functionally, catalyzes amidations at positions B, D, E, and G on adenosylcobyrinic A,C-diamide. NH(2) groups are provided by glutamine, and one molecule of ATP is hydrogenolyzed for each amidation. This chain is Probable cobyric acid synthase, found in Thermococcus gammatolerans (strain DSM 15229 / JCM 11827 / EJ3).